The chain runs to 867 residues: Piwi-like protein 1 (867 aa).

Over residues 1-11 (MTGRARARARG) the composition is skewed to basic residues. The tract at residues 1 to 70 (MTGRARARAR…QRGPQDAPKT (70 aa)) is disordered. The segment covering 28 to 44 (AQKTLPSHPSEQRQSLQ) has biased composition (polar residues). The 112-residue stretch at 286–397 (TVLDFMYSLY…LIPELCYLTG (112 aa)) folds into the PAZ domain. The interval 324–326 (TYR) is required for binding 2'-O-methylated 3'-end of piRNAs. Residues 485–621 (SRETRVAPLI…LQMNCKMGGE (137 aa)) form an MID region region. The 293-residue stretch at 561–853 (IVVCILSSTR…LAFLVGQSIH (293 aa)) folds into the Piwi domain. Residues D638, E676, D708, and H842 contribute to the active site.

The protein belongs to the argonaute family. Piwi subfamily. It depends on Mg(2+) as a cofactor. In terms of processing, methylated on arginine residues; required for the interaction with Tudor domain-containing protein and subsequent localization to the meiotic nuage, also named P granule.

The protein localises to the cytoplasm. Its function is as follows. Endoribonuclease that plays a central role in postnatal germ cells by repressing transposable elements and preventing their mobilization, which is essential for the germline integrity. Acts via the piRNA metabolic process, which mediates the repression of transposable elements during meiosis by forming complexes composed of piRNAs and Piwi proteins and govern the methylation and subsequent repression of transposons. Directly binds methylated piRNAs, a class of 24 to 30 nucleotide RNAs that are generated by a Dicer-independent mechanism and are primarily derived from transposons and other repeated sequence elements. Strongly prefers a uridine in the first position of their guide (g1U preference, also named 1U-bias). Besides their function in transposable elements repression, piRNAs are probably involved in other processes during meiosis such as translation regulation. Not involved in the piRNA amplification loop, also named ping-pong amplification cycle. Acts as an endoribonuclease that cleaves transposon messenger RNAs. This Gallus gallus (Chicken) protein is Piwi-like protein 1 (PIWIL1).